The sequence spans 214 residues: Pyridoxine/pyridoxamine 5'-phosphate oxidase (214 aa).

Residues 9 to 12 (RREY) and lysine 67 contribute to the substrate site. FMN is bound by residues 62-67 (RTVLLK), 77-78 (YS), arginine 83, lysine 84, and glutamine 106. Residues tyrosine 124, arginine 128, and serine 132 each coordinate substrate. Residues 141–142 (QS) and tryptophan 186 contribute to the FMN site. 192–194 (RLH) is a substrate binding site. Residue arginine 196 coordinates FMN.

This sequence belongs to the pyridoxamine 5'-phosphate oxidase family. In terms of assembly, homodimer. Requires FMN as cofactor.

It carries out the reaction pyridoxamine 5'-phosphate + O2 + H2O = pyridoxal 5'-phosphate + H2O2 + NH4(+). The enzyme catalyses pyridoxine 5'-phosphate + O2 = pyridoxal 5'-phosphate + H2O2. The protein operates within cofactor metabolism; pyridoxal 5'-phosphate salvage; pyridoxal 5'-phosphate from pyridoxamine 5'-phosphate: step 1/1. Its pathway is cofactor metabolism; pyridoxal 5'-phosphate salvage; pyridoxal 5'-phosphate from pyridoxine 5'-phosphate: step 1/1. Catalyzes the oxidation of either pyridoxine 5'-phosphate (PNP) or pyridoxamine 5'-phosphate (PMP) into pyridoxal 5'-phosphate (PLP). The sequence is that of Pyridoxine/pyridoxamine 5'-phosphate oxidase from Porphyromonas gingivalis (strain ATCC 33277 / DSM 20709 / CIP 103683 / JCM 12257 / NCTC 11834 / 2561).